The sequence spans 123 residues: Small ribosomal subunit protein uS12 (123 aa).

3-methylthioaspartic acid is present on Asp-89.

This sequence belongs to the universal ribosomal protein uS12 family. As to quaternary structure, part of the 30S ribosomal subunit. Contacts proteins S8 and S17. May interact with IF1 in the 30S initiation complex.

With S4 and S5 plays an important role in translational accuracy. In terms of biological role, interacts with and stabilizes bases of the 16S rRNA that are involved in tRNA selection in the A site and with the mRNA backbone. Located at the interface of the 30S and 50S subunits, it traverses the body of the 30S subunit contacting proteins on the other side and probably holding the rRNA structure together. The combined cluster of proteins S8, S12 and S17 appears to hold together the shoulder and platform of the 30S subunit. This is Small ribosomal subunit protein uS12 from Afipia carboxidovorans (strain ATCC 49405 / DSM 1227 / KCTC 32145 / OM5) (Oligotropha carboxidovorans).